The primary structure comprises 706 residues: Kinesin-like protein KIP2 (706 aa).

2 stretches are compositionally biased toward low complexity: residues 1-28 and 36-63; these read MIQKMSPSLRRPSTRSSSGSSNIPQSPS and SNLTRNSIRSTSNSGSQSISASSTRSNS. The tract at residues 1 to 139 is disordered; that stretch reads MIQKMSPSLR…QPRSNSHHGS (139 aa). Residues 102–493 form the Kinesin motor domain; the sequence is SITVTIRPKP…LRFASRAKNV (392 aa). Over residues 127–139 the composition is skewed to polar residues; sequence RYSQPRSNSHHGS. 202-209 is an ATP binding site; the sequence is GMTGSGKT. The segment at 413-445 is disordered; that stretch reads VGSNIPSPSASGSSSSSGNATNNGTSPSNHIPY. A compositionally biased stretch (low complexity) spans 414–441; that stretch reads GSNIPSPSASGSSSSSGNATNNGTSPSN. 3 coiled-coil regions span residues 507-541, 569-589, and 612-689; these read NNDGDKDRTIELLRRQLEEQRRMISELKNRSNIGE, MRAENRVLKYKLENCEKLLDK, and TLLE…RALK.

It belongs to the TRAFAC class myosin-kinesin ATPase superfamily. Kinesin family. Might be dimeric.

The protein resides in the cytoplasm. Its subcellular location is the cytoskeleton. In terms of biological role, required for assembly of the mitotic spindle. The sequence is that of Kinesin-like protein KIP2 (KIP2) from Saccharomyces cerevisiae (strain ATCC 204508 / S288c) (Baker's yeast).